Consider the following 298-residue polypeptide: NAD kinase (298 aa).

The active-site Proton acceptor is the Asp-80. Residues 80–81 (DG), 154–155 (ND), Arg-182, Asp-184, 195–200 (TAYALS), Ala-219, and Gln-253 contribute to the NAD(+) site.

The protein belongs to the NAD kinase family. It depends on a divalent metal cation as a cofactor.

Its subcellular location is the cytoplasm. It catalyses the reaction NAD(+) + ATP = ADP + NADP(+) + H(+). Its function is as follows. Involved in the regulation of the intracellular balance of NAD and NADP, and is a key enzyme in the biosynthesis of NADP. Catalyzes specifically the phosphorylation on 2'-hydroxyl of the adenosine moiety of NAD to yield NADP. The sequence is that of NAD kinase from Paracidovorax citrulli (strain AAC00-1) (Acidovorax citrulli).